Here is a 1122-residue protein sequence, read N- to C-terminus: Angiopoietin-1 receptor (1122 aa).

An N-terminal signal peptide occupies residues 1–22; the sequence is MDSLAGLVLCGVSLLLYGVVEG. The Extracellular segment spans residues 23–746; that stretch reads AMDLILINSL…SADLGGGKML (724 aa). Residues C44 and C102 are joined by a disulfide bond. One can recognise an Ig-like C2-type 1 domain in the interval 44–123; it reads CIASGWHPHE…RTMKMRQQAS (80 aa). N-linked (GlcNAc...) asparagine glycosylation is found at N140 and N158. 3 EGF-like domains span residues 210-252, 254-299, and 301-341; these read RCEA…RTCE, ACEP…LQCN, and ACPS…LQCE. Cystine bridges form between C211-C220, C224-C233, C227-C240, C242-C251, C255-C264, C268-C274, C280-C287, C289-C298, C302-C311, C315-C323, C317-C329, C331-C340, and C370-C424. Residues 350–440 enclose the Ig-like C2-type 2 domain; that stretch reads PQIEDLPDHI…GMVEKPFNIS (91 aa). Residues N399, N438, N464, N558, N595, N648, and N690 are each glycosylated (N-linked (GlcNAc...) asparagine). 3 consecutive Fibronectin type-III domains span residues 444–539, 543–635, and 640–733; these read LPEP…TASI, PPRG…TLSD, and QPEN…TLPH. The chain crosses the membrane as a helical span at residues 747-767; the sequence is LIAILGSAGMTCITVLLAFLI. Residues 768–1122 are Cytoplasmic-facing; sequence MLQLKRANVQ…GIDCSAEEAA (355 aa). In terms of domain architecture, Protein kinase spans 822–1094; sequence IKFQDVIGEG…QILVSLNRML (273 aa). ATP-binding positions include 828 to 836 and K853; that span reads IGEGNFGQV. Y858 is modified (phosphotyrosine; by autocatalysis). The Proton acceptor role is filled by D962. 3 positions are modified to phosphotyrosine; by autocatalysis: Y990, Y1100, and Y1106.

Belongs to the protein kinase superfamily. Tyr protein kinase family. Tie subfamily. As to quaternary structure, homodimer. Heterodimer with TIE1. Interacts with ANGPT1, ANGPT2 and ANGPT4. At cell-cell contacts in quiescent cells, forms a signaling complex composed of ANGPT1 plus TEK molecules from two adjoining cells. In the absence of endothelial cell-cell contacts, interaction with ANGPT1 mediates contacts with the extracellular matrix. Interacts (tyrosine phosphorylated) with TNIP2. Interacts (tyrosine phosphorylated) with SHC1 (via SH2 domain). Interacts with PTPRB; this promotes endothelial cell-cell adhesion. Interacts with DOK2, GRB2, GRB7, GRB14, PIK3R1 and PTPN11/SHP2. Colocalizes with DOK2 at contacts with the extracellular matrix in migrating cells. Proteolytic processing leads to the shedding of the extracellular domain (soluble TIE-2 alias sTIE-2). In terms of processing, autophosphorylated on tyrosine residues in response to ligand binding. Autophosphorylation occurs in trans, i.e. one subunit of the dimeric receptor phosphorylates tyrosine residues on the other subunit. Autophosphorylation occurs in a sequential manner, where Tyr-990 in the kinase activation loop is phosphorylated first, followed by autophosphorylation at Tyr-1106 and at additional tyrosine residues. ANGPT1-induced phosphorylation is impaired during hypoxia, due to increased expression of ANGPT2. Phosphorylation is important for interaction with GRB14, PIK3R1 and PTPN11. Phosphorylation at Tyr-1100 is important for interaction with GRB2 and GRB7. Phosphorylation at Tyr-1106 is important for interaction with DOK2 and for coupling to downstream signal transduction pathways in endothelial cells. Dephosphorylated by PTPRB. Post-translationally, ubiquitinated. The phosphorylated receptor is ubiquitinated and internalized, leading to its degradation. As to expression, specifically expressed in developing vascular endothelial cells. Abundantly expressed in lung and heart, moderately in brain, liver and kidney, and weakly in thymus, spleen and testis.

The protein resides in the cell membrane. The protein localises to the cell junction. It is found in the focal adhesion. Its subcellular location is the cytoplasm. It localises to the cytoskeleton. The protein resides in the secreted. The enzyme catalyses L-tyrosyl-[protein] + ATP = O-phospho-L-tyrosyl-[protein] + ADP + H(+). With respect to regulation, angiopoietin binding leads to receptor dimerization and activation by autophosphorylation at Tyr-990 on the kinase activation loop. Functionally, tyrosine-protein kinase that acts as a cell-surface receptor for ANGPT1, ANGPT2 and ANGPT4 and regulates angiogenesis, endothelial cell survival, proliferation, migration, adhesion and cell spreading, reorganization of the actin cytoskeleton, but also maintenance of vascular quiescence. Has anti-inflammatory effects by preventing the leakage of pro-inflammatory plasma proteins and leukocytes from blood vessels. Required for normal angiogenesis and heart development during embryogenesis. Required for postnatal hematopoiesis. After birth, activates or inhibits angiogenesis, depending on the context. Inhibits angiogenesis and promotes vascular stability in quiescent vessels, where endothelial cells have tight contacts. In quiescent vessels, ANGPT1 oligomers recruit TEK to cell-cell contacts, forming complexes with TEK molecules from adjoining cells, and this leads to preferential activation of phosphatidylinositol 3-kinase and the AKT1 signaling cascades. In migrating endothelial cells that lack cell-cell adhesions, ANGT1 recruits TEK to contacts with the extracellular matrix, leading to the formation of focal adhesion complexes, activation of PTK2/FAK and of the downstream kinases MAPK1/ERK2 and MAPK3/ERK1, and ultimately to the stimulation of sprouting angiogenesis. ANGPT1 signaling triggers receptor dimerization and autophosphorylation at specific tyrosine residues that then serve as binding sites for scaffold proteins and effectors. Signaling is modulated by ANGPT2 that has lower affinity for TEK, can promote TEK autophosphorylation in the absence of ANGPT1, but inhibits ANGPT1-mediated signaling by competing for the same binding site. Signaling is also modulated by formation of heterodimers with TIE1, and by proteolytic processing that gives rise to a soluble TEK extracellular domain. The soluble extracellular domain modulates signaling by functioning as decoy receptor for angiopoietins. TEK phosphorylates DOK2, GRB7, GRB14, PIK3R1, SHC1 and TIE1. The sequence is that of Angiopoietin-1 receptor (Tek) from Mus musculus (Mouse).